A 212-amino-acid chain; its full sequence is Root-specific lectin (212 aa).

An N-terminal signal peptide occupies residues 1–26; sequence MKMMSTRALALGAAAVLAFAAATAHA. Q27 is subject to Pyrrolidone carboxylic acid. Chitin-binding type-1 domains are found at residues 27–68, 69–111, 112–154, and 155–197; these read QRCG…ACYT, SKRC…PCRA, DIKC…ACST, and DKPC…GCDG. 16 cysteine pairs are disulfide-bonded: C29–C44, C38–C50, C43–C57, C61–C66, C72–C87, C81–C93, C86–C100, C104–C109, C115–C130, C124–C136, C129–C143, C147–C152, C158–C173, C167–C179, C172–C186, and C190–C195. 36-38 contacts substrate; that stretch reads MEC. 88–99 is a binding site for substrate; sequence SQWGYCGFGAEY. 140–141 lines the substrate pocket; that stretch reads SE. The N-linked (GlcNAc...) asparagine glycan is linked to N206.

As to expression, in roots.

In terms of biological role, carbohydrate binding. This is Root-specific lectin from Hordeum vulgare (Barley).